The following is a 507-amino-acid chain: Histidine ammonia-lyase (507 aa).

Positions 141–143 (ASG) form a cross-link, 5-imidazolinone (Ala-Gly). S142 carries the post-translational modification 2,3-didehydroalanine (Ser).

It belongs to the PAL/histidase family. Contains an active site 4-methylidene-imidazol-5-one (MIO), which is formed autocatalytically by cyclization and dehydration of residues Ala-Ser-Gly.

The protein localises to the cytoplasm. It catalyses the reaction L-histidine = trans-urocanate + NH4(+). It participates in amino-acid degradation; L-histidine degradation into L-glutamate; N-formimidoyl-L-glutamate from L-histidine: step 1/3. The polypeptide is Histidine ammonia-lyase (Burkholderia ambifaria (strain MC40-6)).